The primary structure comprises 127 residues: Fluoride-specific ion channel FluC 2 (127 aa).

4 helical membrane passes run 4–24, 31–51, 62–82, and 94–114; these read IIAITGFAMLGGGLREGLSLL, FWITCLINIVGAFVLSLITNL, IVIGMSVGFVGSFTTFSTFTF, and VLALSYVAASLGLGLLAGLAG. Residues Gly72 and Thr75 each coordinate Na(+).

It belongs to the fluoride channel Fluc/FEX (TC 1.A.43) family.

Its subcellular location is the cell membrane. It carries out the reaction fluoride(in) = fluoride(out). Na(+) is not transported, but it plays an essential structural role and its presence is essential for fluoride channel function. In terms of biological role, fluoride-specific ion channel. Important for reducing fluoride concentration in the cell, thus reducing its toxicity. This Lactiplantibacillus plantarum (strain ATCC BAA-793 / NCIMB 8826 / WCFS1) (Lactobacillus plantarum) protein is Fluoride-specific ion channel FluC 2.